Reading from the N-terminus, the 156-residue chain is FVANRMAHELGHNLGIDNDRDSCSCGANSCIMSATVSNEPSSRFSDCSLNQYSSDLINYYGCLLNEPLRTDIVSPPFCGNYYPEVGEDCDCGPPANCQNPCCDAATCKLTTGSQCAEGLCCDQCKFIKARQICRKGRGDNPDDRCTGQSGDCPRNS.

In terms of domain architecture, Peptidase M12B spans 1–67 (FVANRMAHEL…NYYGCLLNEP (67 aa)). Position 8 (histidine 8) interacts with Zn(2+). Residue glutamate 9 is part of the active site. Histidine 12 serves as a coordination point for Zn(2+). Intrachain disulfides connect cysteine 23–cysteine 47, cysteine 25–cysteine 30, cysteine 78–cysteine 97, cysteine 89–cysteine 107, cysteine 91–cysteine 102, cysteine 101–cysteine 124, cysteine 115–cysteine 121, cysteine 120–cysteine 145, and cysteine 133–cysteine 152. The region spanning 75-156 (PPFCGNYYPE…GQSGDCPRNS (82 aa)) is the Disintegrin domain. Positions 136 to 145 (GRGDNPDDRC) are enriched in basic and acidic residues. Residues 136–156 (GRGDNPDDRCTGQSGDCPRNS) form a disordered region. The short motif at 137–139 (RGD) is the Cell attachment site element. The segment covering 146-156 (TGQSGDCPRNS) has biased composition (polar residues).

It belongs to the venom metalloproteinase (M12B) family. P-II subfamily. P-IIb sub-subfamily. In terms of assembly, monomer. Requires Zn(2+) as cofactor. Expressed by the venom gland.

It localises to the secreted. Snake venom zinc metalloproteinase that inhibits ADP-induced platelet aggregation (probably by binding integrin alpha-IIb/beta-3 (ITGA2B/ITGB3)) and degrades fibrinogen. The protein is Zinc metalloproteinase-disintegrin jararin of Bothrops jararaca (Jararaca).